Here is a 254-residue protein sequence, read N- to C-terminus: MTKLEVCCYSVDCAQIAEKAGADRVELCCGQSEGGVTPSVGALMQARETVTIPVHPIVRPRGGDFCYSSNDFTIMKNDIARIRDLGFAGVVVGVLDTDGHIDMPRMREIMSVSGSLVVTFHRAFDMCQNPMIALKQLAELNVARILTSGQQQNAELGLALLKDLVAATKDQGPIIMAGAGVRLTNMQKFIDAGIRELHSSAGRTVPSTMRYRKAGVTMCADSDVDEFSHYCVDGEVVEAMKSLLVMGSPLAKHT.

This sequence belongs to the CutC family.

The protein resides in the cytoplasm. The protein is PF03932 family protein CutC of Yersinia pestis bv. Antiqua (strain Angola).